The chain runs to 345 residues: Tropomodulin-4 (345 aa).

A disordered region spans residues 42–63 (NMLLPAGLRQRDQTKKSPTGPL).

The protein belongs to the tropomodulin family. Binds to the N-terminus of tropomyosin and to actin. In terms of tissue distribution, highly expressed in skeletal muscle.

Its subcellular location is the cytoplasm. The protein resides in the cytoskeleton. Blocks the elongation and depolymerization of the actin filaments at the pointed end. The Tmod/TM complex contributes to the formation of the short actin protofilament, which in turn defines the geometry of the membrane skeleton. The protein is Tropomodulin-4 (TMOD4) of Homo sapiens (Human).